A 147-amino-acid polypeptide reads, in one-letter code: MATMLKVSLVLSLLGFLVIAVVTPSAANPFRKSVVLGGKSGVPNIRTNREIQQLGRYCVEQFNQQAQNEQGNIGSIAKTDTAISNPLQFSRVVSAQKQVVAGLKYYLRIEVTQPNGSTRMFDSVVVIQPWLHSKQLLGFTPVVSPVY.

The signal sequence occupies residues 1 to 27 (MATMLKVSLVLSLLGFLVIAVVTPSAA). The 31-residue stretch at 87–117 (LQFSRVVSAQKQVVAGLKYYLRIEVTQPNGS) folds into the Cystatin domain. Residues 98-102 (QVVAG) carry the Secondary area of contact motif. Residue asparagine 115 is glycosylated (N-linked (GlcNAc...) asparagine).

This sequence belongs to the cystatin family. Phytocystatin subfamily.

The protein resides in the secreted. In terms of biological role, specific inhibitor of cysteine proteinases. Probably involved in the regulation of endogenous processes and in defense against pests and pathogens. This Arabidopsis thaliana (Mouse-ear cress) protein is Cysteine proteinase inhibitor 2 (CYS2).